A 240-amino-acid polypeptide reads, in one-letter code: 1-(5-phosphoribosyl)-5-[(5-phosphoribosylamino)methylideneamino] imidazole-4-carboxamide isomerase (240 aa).

Asp-8 acts as the Proton acceptor in catalysis. Residue Asp-129 is the Proton donor of the active site.

The protein belongs to the HisA/HisF family.

Its subcellular location is the cytoplasm. The catalysed reaction is 1-(5-phospho-beta-D-ribosyl)-5-[(5-phospho-beta-D-ribosylamino)methylideneamino]imidazole-4-carboxamide = 5-[(5-phospho-1-deoxy-D-ribulos-1-ylimino)methylamino]-1-(5-phospho-beta-D-ribosyl)imidazole-4-carboxamide. Its pathway is amino-acid biosynthesis; L-histidine biosynthesis; L-histidine from 5-phospho-alpha-D-ribose 1-diphosphate: step 4/9. This Oceanobacillus iheyensis (strain DSM 14371 / CIP 107618 / JCM 11309 / KCTC 3954 / HTE831) protein is 1-(5-phosphoribosyl)-5-[(5-phosphoribosylamino)methylideneamino] imidazole-4-carboxamide isomerase.